The following is an 875-amino-acid chain: Kelch-like protein 29 (875 aa).

Residues 113 to 126 (IRWGQTPVNQSTPW) show a composition bias toward polar residues. Disordered stretches follow at residues 113-145 (IRWGQTPVNQSTPWDTDEPPSKQMRESDNPGTG) and 240-291 (GVGQ…DSAH). Residues 131–140 (PPSKQMRESD) show a composition bias toward basic and acidic residues. Over residues 270–280 (PSAALPSSVPA) the composition is skewed to low complexity. In terms of domain architecture, BTB spans 329–401 (TDLKIVVEGR…VYTGSLVIDS (73 aa)). 6 Kelch repeats span residues 585 to 635 (VIVL…VSAG), 637 to 683 (NIYL…VYDG), 684 to 730 (KIYT…VCGG), 732 to 778 (IYVF…TLNG), 779 to 821 (FVFI…VLDG), and 822 to 870 (KIYA…VIKK).

The chain is Kelch-like protein 29 (Klhl29) from Mus musculus (Mouse).